The following is a 2136-amino-acid chain: U5 small nuclear ribonucleoprotein 200 kDa helicase (2136 aa).

A phosphoserine mark is found at S17 and S26. The disordered stretch occupies residues 39–81; that stretch reads EVLSLVGKLEGTRMGDKAQRTKPQMQEERRAKRRKRDEDRHDM. Residue K46 forms a Glycyl lysine isopeptide (Lys-Gly) (interchain with G-Cter in SUMO2) linkage. The segment covering 48-81 has biased composition (basic and acidic residues); sequence EGTRMGDKAQRTKPQMQEERRAKRRKRDEDRHDM. Positions 54–84 form a coiled coil; sequence DKAQRTKPQMQEERRAKRRKRDEDRHDMNKM. S225 is modified (phosphoserine). Phosphothreonine is present on T389. Residues 395-2129 form an interaction with C9orf78 and WBP4 region; it reads DLDQGGEALA…YKFSVDVKEA (1735 aa). The Helicase ATP-binding 1 domain occupies 490 to 673; sequence RAALETDENL…FLRVDPAKGL (184 aa). 503–510 contacts ATP; that stretch reads APTGAGKT. A DEAH box motif is present at residues 615 to 618; the sequence is DEIH. In terms of domain architecture, Helicase C-terminal 1 spans 684–921; it reads PLEQTYVGIT…NAKDAVNWLG (238 aa). Position 709 is a phosphotyrosine (Y709). A Glycyl lysine isopeptide (Lys-Gly) (interchain with G-Cter in SUMO) cross-link involves residue K944. K971 carries the post-translational modification N6-acetyllysine; alternate. Residue K971 forms a Glycyl lysine isopeptide (Lys-Gly) (interchain with G-Cter in SUMO); alternate linkage. The 305-residue stretch at 982-1286 folds into the SEC63 1 domain; sequence TELGRIASHY…SCETQLPVSF (305 aa). Glycyl lysine isopeptide (Lys-Gly) (interchain with G-Cter in SUMO) cross-links involve residues K1071 and K1199. The interaction with TSSC4 stretch occupies residues 1282–2136; that stretch reads LPVSFRHLIL…KEAETDSDSD (855 aa). Residues 1337–1512 form the Helicase ATP-binding 2 domain; sequence NTVYNSDDNV…WLGCSATSTF (176 aa). Position 1350 to 1357 (1350 to 1357) interacts with ATP; sequence APTGSGKT. T1428 carries the phosphothreonine modification. The DEAH box signature appears at 1454 to 1457; the sequence is DEVH. A Helicase C-terminal 2 domain is found at 1545–1753; sequence PVYHAITKHS…TIENKQDAVD (209 aa). T1765 bears the Phosphothreonine mark. Residues 1812-2124 form the SEC63 2 domain; the sequence is PLNLGMIAAY…GCDQEYKFSV (313 aa). S2002 carries the phosphoserine modification. A Glycyl lysine isopeptide (Lys-Gly) (interchain with G-Cter in SUMO) cross-link involves residue K2091. Residue T2131 is modified to Phosphothreonine. S2133 and S2135 each carry phosphoserine.

This sequence belongs to the helicase family. SKI2 subfamily. In terms of assembly, component of a core complex containing at least PRPF8, SNRNP200, EFTUD2 and SNRNP40. Component of the U5 snRNP and U4/U6-U5 tri-snRNP complexes, building blocks of the spliceosome. Component of the U4/U6-U5 tri-snRNP complex composed of the U4, U6 and U5 snRNAs and at least PRPF3, PRPF4, PRPF6, PRPF8, PRPF31, SNRNP200, TXNL4A, SNRNP40, DDX23, CD2BP2, PPIH, SNU13, EFTUD2, SART1 and USP39. Component of precatalytic, catalytic and postcatalytic spliceosomal complexes. Component of the minor spliceosome, which splices U12-type introns. Interacts with C9orf78; the interaction is direct and mutually exclusive with its interaction with WBP4. Interacts with WBP4; the interaction is mutually exclusive with its interaction with C9orf78. Interacts with PRPF8. Interacts with TSSC4; the interaction is direct, excludes recruitment of C9ORF78 and WBP4 to SNRNP200 and negatively regulates its RNA helicase activity.

Its subcellular location is the nucleus. The catalysed reaction is ATP + H2O = ADP + phosphate + H(+). Functionally, catalyzes the ATP-dependent unwinding of U4/U6 RNA duplices, an essential step in the assembly of a catalytically active spliceosome. Plays a role in pre-mRNA splicing as core component of precatalytic, catalytic and postcatalytic spliceosomal complexes. As a component of the minor spliceosome, involved in the splicing of U12-type introns in pre-mRNAs. Involved in spliceosome assembly, activation and disassembly. Mediates changes in the dynamic network of RNA-RNA interactions in the spliceosome. In Mus musculus (Mouse), this protein is U5 small nuclear ribonucleoprotein 200 kDa helicase (Snrnp200).